The sequence spans 397 residues: Elongation factor Tu 1 (397 aa).

Residues 10–206 (KPHVNIGTIG…AIDTWIPEPV (197 aa)) enclose the tr-type G domain. The segment at 19-26 (GHVDHGKT) is G1. 19–26 (GHVDHGKT) lines the GTP pocket. Threonine 26 is a binding site for Mg(2+). Positions 61-65 (GITIS) are G2. Residues 82–85 (DCPG) form a G3 region. Residues 82–86 (DCPGH) and 137–140 (NKCD) contribute to the GTP site. Residues 137 to 140 (NKCD) are G4. The G5 stretch occupies residues 175-177 (SAL).

This sequence belongs to the TRAFAC class translation factor GTPase superfamily. Classic translation factor GTPase family. EF-Tu/EF-1A subfamily. Monomer.

The protein localises to the cytoplasm. The catalysed reaction is GTP + H2O = GDP + phosphate + H(+). In terms of biological role, GTP hydrolase that promotes the GTP-dependent binding of aminoacyl-tRNA to the A-site of ribosomes during protein biosynthesis. The chain is Elongation factor Tu 1 from Alkaliphilus metalliredigens (strain QYMF).